The sequence spans 485 residues: Chitin synthase regulator 2 (485 aa).

Sel1-like repeat units lie at residues 164–202 (PDAQ…KHGH), 203–238 (PDAC…VGLH), 239–275 (PGAM…EHAT), 279–316 (PHAL…ELGY), 317–353 (APSA…QQDH), 354–391 (KDAC…ELGL), and 392–427 (AKAQ…EGGD). The disordered stretch occupies residues 460 to 485 (AANLAQRSGSGSGASGKDGKDGCLIM). A compositionally biased stretch (basic and acidic residues) spans 476–485 (KDGKDGCLIM). A Cysteine methyl ester modification is found at C482. C482 is lipidated: S-farnesyl cysteine. The propeptide at 483-485 (LIM) is removed in mature form.

Belongs to the SKT5 family.

It is found in the cell membrane. Activator of the chitin synthase CHS3 which polymerizes chitin, a structural polymer of the fungal cell wall. Chitin produced by CHS3 is deacetylated to chitosan, which helps to maintain cell wall integrity, anchor melanin, and offers an advantage during infection, as chitosan is less readily detected by host immunosurveillance. This Cryptococcus neoformans var. grubii serotype A (strain H99 / ATCC 208821 / CBS 10515 / FGSC 9487) (Filobasidiella neoformans var. grubii) protein is Chitin synthase regulator 2.